A 398-amino-acid polypeptide reads, in one-letter code: Mannitol-1-phosphate 5-dehydrogenase (398 aa).

10-21 (AVHFGAGNIGRG) is a binding site for NAD(+). Lys-221 is an active-site residue.

Belongs to the mannitol dehydrogenase family. In terms of assembly, monomer.

It catalyses the reaction D-mannitol 1-phosphate + NAD(+) = beta-D-fructose 6-phosphate + NADH + H(+). Functionally, catalyzes the NAD(H)-dependent interconversion of D-fructose 6-phosphate and D-mannitol 1-phosphate in the mannitol metabolic pathway. The protein is Mannitol-1-phosphate 5-dehydrogenase of Neurospora crassa (strain ATCC 24698 / 74-OR23-1A / CBS 708.71 / DSM 1257 / FGSC 987).